Here is a 439-residue protein sequence, read N- to C-terminus: Ribosomal protein uS12 methylthiotransferase RimO (439 aa).

In terms of domain architecture, MTTase N-terminal spans 3 to 118 (KKFYITTLGC…AGKILREKFP (116 aa)). Residues C12, C48, C81, C157, C161, and C164 each contribute to the [4Fe-4S] cluster site. The region spanning 143-370 (NYSKPYAYVK…RDVHLAILEE (228 aa)) is the Radical SAM core domain. One can recognise a TRAM domain in the interval 373-438 (ESRIGQTYDA…EYDMNGTWIS (66 aa)).

This sequence belongs to the methylthiotransferase family. RimO subfamily. It depends on [4Fe-4S] cluster as a cofactor.

The protein resides in the cytoplasm. It catalyses the reaction L-aspartate(89)-[ribosomal protein uS12]-hydrogen + (sulfur carrier)-SH + AH2 + 2 S-adenosyl-L-methionine = 3-methylsulfanyl-L-aspartate(89)-[ribosomal protein uS12]-hydrogen + (sulfur carrier)-H + 5'-deoxyadenosine + L-methionine + A + S-adenosyl-L-homocysteine + 2 H(+). Functionally, catalyzes the methylthiolation of an aspartic acid residue of ribosomal protein uS12. In Leptospira borgpetersenii serovar Hardjo-bovis (strain L550), this protein is Ribosomal protein uS12 methylthiotransferase RimO.